The following is a 642-amino-acid chain: Chaperone protein HtpG (642 aa).

The tract at residues 1–350 is a; substrate-binding; it reads MATDTQKETL…SNDLSLNVSR (350 aa). The interval 351–567 is b; that stretch reads EILQNDHAVD…EYDMGLQMRR (217 aa). The interval 568–642 is c; the sequence is LLEQAGQKLP…MNKLIVQLSK (75 aa).

The protein belongs to the heat shock protein 90 family. In terms of assembly, homodimer.

It localises to the cytoplasm. In terms of biological role, molecular chaperone. Has ATPase activity. The protein is Chaperone protein HtpG of Marinomonas sp. (strain MWYL1).